Consider the following 526-residue polypeptide: Radial spoke head protein 6 homolog A (526 aa).

3 disordered regions span residues 180–231, 371–411, and 469–526; these read EGED…EENG, VKSE…DAEI, and PPAP…EEDD. Composition is skewed to acidic residues over residues 181 to 212 and 374 to 395; these read GEDD…EAED and EEEE…EPEP. Residues 497-506 are compositionally biased toward basic and acidic residues; it reads QALKAAKEEA. The segment covering 507 to 526 has biased composition (acidic residues); it reads EAAAEEMEEEEDEEEEEEDD.

The protein belongs to the flagellar radial spoke RSP4/6 family. In terms of assembly, component of sperm axonemal radial spoke complexes.

The protein localises to the cytoplasm. The protein resides in the cytoskeleton. Its subcellular location is the flagellum axoneme. Functions as part of radial spoke complexes in the axoneme of sperm flagella that play an important part in motility. The triple radial spokes (RS1, RS2 and RS3) are required to modulate beating of the sperm flagellum. This Xenopus tropicalis (Western clawed frog) protein is Radial spoke head protein 6 homolog A (rsph6a).